Reading from the N-terminus, the 139-residue chain is NADH dehydrogenase [ubiquinone] 1 alpha subcomplex subunit MCI4 (139 aa).

The protein belongs to the complex I NDUFA5 subunit family.

The protein localises to the mitochondrion inner membrane. Functionally, accessory subunit of the mitochondrial membrane respiratory chain NADH dehydrogenase (Complex I), that is believed not to be involved in catalysis. Complex I functions in the transfer of electrons from NADH to the respiratory chain. The immediate electron acceptor for the enzyme is believed to be ubiquinone. Involved in osmotic and oxidative resistance, yeast to hypha transition and the ability to damage and invade oral epithelial cells. In Candida albicans (strain SC5314 / ATCC MYA-2876) (Yeast), this protein is NADH dehydrogenase [ubiquinone] 1 alpha subcomplex subunit MCI4.